We begin with the raw amino-acid sequence, 572 residues long: Receptor-type adenylate cyclase GRESAG 4.2 (572 aa).

Residues 1-225 lie on the Extracellular side of the membrane; the sequence is RKTLLTFGLN…PNGNALTPAQ (225 aa). 3 N-linked (GlcNAc...) asparagine glycosylation sites follow: Asn-10, Asn-77, and Asn-152. A helical membrane pass occupies residues 226 to 251; sequence LDWCGWCRFACADTGSRLTVFLCCIM. The Cytoplasmic segment spans residues 252–572; that stretch reads RNKRDNDNAP…TVRRLSVALQ (321 aa). A Guanylate cyclase domain is found at 269–424; sequence TLIFTDIESS…QTANTAARTE (156 aa). Mg(2+) contacts are provided by Asp-274 and Asp-317.

Belongs to the adenylyl cyclase class-3 family. Requires Mg(2+) as cofactor.

It localises to the cell membrane. The catalysed reaction is ATP = 3',5'-cyclic AMP + diphosphate. Its function is as follows. Could act as a receptor for an unknown ligand. This chain is Receptor-type adenylate cyclase GRESAG 4.2 (GRESAG 4.2), found in Trypanosoma brucei brucei.